We begin with the raw amino-acid sequence, 316 residues long: tRNA dimethylallyltransferase (316 aa).

17–24 (GPTASGKT) lines the ATP pocket. 19–24 (TASGKT) contacts substrate. Interaction with substrate tRNA regions lie at residues 42–45 (DSAL), 166–170 (QRLSR), and 247–252 (RCVGYR).

This sequence belongs to the IPP transferase family. Monomer. Mg(2+) serves as cofactor.

The enzyme catalyses adenosine(37) in tRNA + dimethylallyl diphosphate = N(6)-dimethylallyladenosine(37) in tRNA + diphosphate. In terms of biological role, catalyzes the transfer of a dimethylallyl group onto the adenine at position 37 in tRNAs that read codons beginning with uridine, leading to the formation of N6-(dimethylallyl)adenosine (i(6)A). In Salmonella paratyphi C (strain RKS4594), this protein is tRNA dimethylallyltransferase.